A 389-amino-acid polypeptide reads, in one-letter code: Formate-dependent phosphoribosylglycinamide formyltransferase (389 aa).

N(1)-(5-phospho-beta-D-ribosyl)glycinamide is bound by residues 15 to 16 (EL) and glutamate 75. Residues arginine 107, lysine 148, 153-158 (SSGKGQ), 188-191 (EEFL), and glutamate 196 contribute to the ATP site. In terms of domain architecture, ATP-grasp spans 112 to 302 (DLAAGELALR…EFELHLRAVL (191 aa)). Residues glutamate 261 and glutamate 273 each contribute to the Mg(2+) site. N(1)-(5-phospho-beta-D-ribosyl)glycinamide-binding positions include aspartate 280, lysine 350, and 357 to 358 (RR).

The protein belongs to the PurK/PurT family. As to quaternary structure, homodimer.

It carries out the reaction N(1)-(5-phospho-beta-D-ribosyl)glycinamide + formate + ATP = N(2)-formyl-N(1)-(5-phospho-beta-D-ribosyl)glycinamide + ADP + phosphate + H(+). It participates in purine metabolism; IMP biosynthesis via de novo pathway; N(2)-formyl-N(1)-(5-phospho-D-ribosyl)glycinamide from N(1)-(5-phospho-D-ribosyl)glycinamide (formate route): step 1/1. Its function is as follows. Involved in the de novo purine biosynthesis. Catalyzes the transfer of formate to 5-phospho-ribosyl-glycinamide (GAR), producing 5-phospho-ribosyl-N-formylglycinamide (FGAR). Formate is provided by PurU via hydrolysis of 10-formyl-tetrahydrofolate. The sequence is that of Formate-dependent phosphoribosylglycinamide formyltransferase from Synechococcus sp. (strain WH7803).